The chain runs to 133 residues: Profilin (133 aa).

This sequence belongs to the profilin family.

In terms of biological role, more likely to influence phosphoinositide metabolism than actin assembly. The sequence is that of Profilin from Cowpox virus (strain GRI-90 / Grishak) (CPV).